The following is a 127-amino-acid chain: Aspartate 1-decarboxylase (127 aa).

The active-site Schiff-base intermediate with substrate; via pyruvic acid is serine 25. Serine 25 is modified (pyruvic acid (Ser)). A substrate-binding site is contributed by threonine 57. Tyrosine 58 (proton donor) is an active-site residue. Residue 73 to 75 (GAA) participates in substrate binding.

The protein belongs to the PanD family. Heterooctamer of four alpha and four beta subunits. Requires pyruvate as cofactor. Post-translationally, is synthesized initially as an inactive proenzyme, which is activated by self-cleavage at a specific serine bond to produce a beta-subunit with a hydroxyl group at its C-terminus and an alpha-subunit with a pyruvoyl group at its N-terminus.

The protein resides in the cytoplasm. The catalysed reaction is L-aspartate + H(+) = beta-alanine + CO2. Its pathway is cofactor biosynthesis; (R)-pantothenate biosynthesis; beta-alanine from L-aspartate: step 1/1. Catalyzes the pyruvoyl-dependent decarboxylation of aspartate to produce beta-alanine. In Staphylococcus carnosus (strain TM300), this protein is Aspartate 1-decarboxylase.